A 94-amino-acid polypeptide reads, in one-letter code: Lipoate-protein ligase A subunit 2 (94 aa).

In terms of assembly, heterodimer composed of LplA and LplB.

It catalyses the reaction L-lysyl-[lipoyl-carrier protein] + (R)-lipoate + ATP = N(6)-[(R)-lipoyl]-L-lysyl-[lipoyl-carrier protein] + AMP + diphosphate + H(+). It functions in the pathway protein modification; protein lipoylation via exogenous pathway; protein N(6)-(lipoyl)lysine from lipoate: step 1/2. Its pathway is protein modification; protein lipoylation via exogenous pathway; protein N(6)-(lipoyl)lysine from lipoate: step 2/2. Its function is as follows. Part of a lipoate-protein ligase complex that catalyzes both the ATP-dependent activation of exogenously supplied lipoate to lipoyl-AMP and the transfer of the activated lipoyl onto the lipoyl domains of lipoate-dependent enzymes. Can also use octanoate as substrate. In Thermoplasma acidophilum (strain ATCC 25905 / DSM 1728 / JCM 9062 / NBRC 15155 / AMRC-C165), this protein is Lipoate-protein ligase A subunit 2 (lplB).